The following is a 796-amino-acid chain: Cadherin-11 (796 aa).

Positions 1 to 22 are cleaved as a signal peptide; sequence MKENYCLQAALVCLGMLCHSHA. Residues 23-53 constitute a propeptide that is removed on maturation; the sequence is FAPERRGHLRPSFHGHHEKGKEGQVLQRSKR. Cadherin domains lie at 54-159, 160-268, 269-383, 384-486, and 487-612; these read GWVW…PPEF, LHET…PPKF, PQSV…PPMF, LAPS…DNAP, and KFAA…YILN. The Extracellular portion of the chain corresponds to 54-617; the sequence is GWVWNQFFVI…AYILNAGLST (564 aa). N-linked (GlcNAc...) asparagine glycosylation is found at N455 and N540. Residues 618–640 form a helical membrane-spanning segment; that stretch reads GALIAILACIVILLVIVVLFVTL. Residues 641–796 are Cytoplasmic-facing; sequence RRQKKEPLIV…GSKDTFDDDS (156 aa). The residue at position 788 (S788) is a Phosphoserine. Phosphothreonine is present on T791.

As to quaternary structure, interacts with PCDH8. In terms of tissue distribution, expressed mainly in brain but also found in other tissues. Expressed in neuroblasts. In the embryo from 67 to 72 days of gestation, detected at high levels in facial mesenchyme including the central palatal mesenchyme, dental mesenchyme, the eye and optic muscle, and the tongue (at protein level).

It localises to the cell membrane. Cadherins are calcium-dependent cell adhesion proteins. They preferentially interact with themselves in a homophilic manner in connecting cells; cadherins may thus contribute to the sorting of heterogeneous cell types. Required for proper focal adhesion assembly. Involved in the regulation of cell migration. The polypeptide is Cadherin-11 (CDH11) (Homo sapiens (Human)).